Reading from the N-terminus, the 168-residue chain is Small ribosomal subunit protein bS16 (168 aa).

Residues 110–168 form a disordered region; the sequence is LSEANNGPTAEAITEKKKKAREEKEAKEAAEKAAAEKAAAAEAEASEEAPAEEAASEEA. Over residues 129 to 144 the composition is skewed to basic and acidic residues; the sequence is AREEKEAKEAAEKAAA. The span at 153–168 shows a compositional bias: acidic residues; the sequence is EASEEAPAEEAASEEA.

It belongs to the bacterial ribosomal protein bS16 family.

The protein is Small ribosomal subunit protein bS16 of Corynebacterium efficiens (strain DSM 44549 / YS-314 / AJ 12310 / JCM 11189 / NBRC 100395).